An 862-amino-acid polypeptide reads, in one-letter code: FAS1 domain-containing protein YLR001C (862 aa).

An N-terminal signal peptide occupies residues 1 to 23 (MNMAIQTIKYIFWLLPILGLTQA). Residues 24–762 (LLQNPGDDFP…KYHLRLPGIA (739 aa)) are Vacuolar-facing. Residues 34–162 (FSTVIDILSE…ASLQGINNLL (129 aa)) enclose the FAS1 1 domain. N-linked (GlcNAc...) asparagine glycans are attached at residues Asn-68, Asn-112, Asn-152, Asn-200, Asn-291, Asn-333, Asn-450, Asn-521, Asn-542, Asn-569, Asn-663, Asn-679, and Asn-688. 2 consecutive FAS1 domains span residues 463–604 (PGDL…DQLD) and 606–744 (PVDL…DKPI). Residues 763–783 (VGFGVIIGVTIAISLLFCIII) traverse the membrane as a helical segment. The Cytoplasmic portion of the chain corresponds to 784–862 (TRGGKVKDKN…QKGGRSVSTS (79 aa)).

The protein resides in the vacuole membrane. The chain is FAS1 domain-containing protein YLR001C from Saccharomyces cerevisiae (strain ATCC 204508 / S288c) (Baker's yeast).